Here is a 241-residue protein sequence, read N- to C-terminus: Octanoyltransferase (241 aa).

The 189-residue stretch at 50-238 (KIAHEQVWLL…AFEQIFGPTI (189 aa)) folds into the BPL/LPL catalytic domain. Substrate contacts are provided by residues 89 to 96 (RGGEFTYH), 169 to 171 (AIG), and 182 to 184 (GIS). Residue Cys-200 is the Acyl-thioester intermediate of the active site.

The protein belongs to the LipB family.

It is found in the cytoplasm. The enzyme catalyses octanoyl-[ACP] + L-lysyl-[protein] = N(6)-octanoyl-L-lysyl-[protein] + holo-[ACP] + H(+). Its pathway is protein modification; protein lipoylation via endogenous pathway; protein N(6)-(lipoyl)lysine from octanoyl-[acyl-carrier-protein]: step 1/2. Functionally, catalyzes the transfer of endogenously produced octanoic acid from octanoyl-acyl-carrier-protein onto the lipoyl domains of lipoate-dependent enzymes. Lipoyl-ACP can also act as a substrate although octanoyl-ACP is likely to be the physiological substrate. The sequence is that of Octanoyltransferase from Bartonella bacilliformis (strain ATCC 35685 / KC583 / Herrer 020/F12,63).